Reading from the N-terminus, the 490-residue chain is Betaine aldehyde dehydrogenase (490 aa).

NAD(+) is bound by residues Lys174, Glu177, and 227-232 (GGIETG). Catalysis depends on residues Glu249 and Cys283. An NAD(+)-binding site is contributed by Glu384.

Belongs to the aldehyde dehydrogenase family. In terms of assembly, homodimer.

It catalyses the reaction betaine aldehyde + NAD(+) + H2O = glycine betaine + NADH + 2 H(+). It functions in the pathway amine and polyamine biosynthesis; betaine biosynthesis via choline pathway; betaine from betaine aldehyde: step 1/1. Activity is stimulated by low concentrations of salts and by moderate concentrations of glycine betaine. Highly tolerant to high ionic conditions. In vitro, activity is highly stimulated in the presence of proline. In terms of biological role, involved in the biosynthesis of the osmoprotectant glycine betaine from choline. Catalyzes the oxidation of betaine aldehyde to betaine. Shows specificity for betaine aldehyde as substrate. Can use both NAD(+) and NADP(+), but NAD(+) is strongly preferred. The chain is Betaine aldehyde dehydrogenase from Bacillus subtilis (strain 168).